Here is a 324-residue protein sequence, read N- to C-terminus: tRNA dimethylallyltransferase (324 aa).

18-25 (GPTAVGKT) lines the ATP pocket. 20 to 25 (TAVGKT) serves as a coordination point for substrate. The interaction with substrate tRNA stretch occupies residues 43-46 (DSRQ).

This sequence belongs to the IPP transferase family. As to quaternary structure, monomer. Mg(2+) serves as cofactor.

It catalyses the reaction adenosine(37) in tRNA + dimethylallyl diphosphate = N(6)-dimethylallyladenosine(37) in tRNA + diphosphate. Its function is as follows. Catalyzes the transfer of a dimethylallyl group onto the adenine at position 37 in tRNAs that read codons beginning with uridine, leading to the formation of N6-(dimethylallyl)adenosine (i(6)A). The polypeptide is tRNA dimethylallyltransferase (Salinibacter ruber (strain DSM 13855 / M31)).